The primary structure comprises 145 residues: 3-hydroxyacyl-[acyl-carrier-protein] dehydratase FabZ (145 aa).

His-48 is a catalytic residue.

This sequence belongs to the thioester dehydratase family. FabZ subfamily.

Its subcellular location is the cytoplasm. The catalysed reaction is a (3R)-hydroxyacyl-[ACP] = a (2E)-enoyl-[ACP] + H2O. In terms of biological role, involved in unsaturated fatty acids biosynthesis. Catalyzes the dehydration of short chain beta-hydroxyacyl-ACPs and long chain saturated and unsaturated beta-hydroxyacyl-ACPs. This chain is 3-hydroxyacyl-[acyl-carrier-protein] dehydratase FabZ, found in Marinomonas sp. (strain MWYL1).